The chain runs to 291 residues: tRNA dimethylallyltransferase (291 aa).

5–12 is an ATP binding site; the sequence is GPTAGGKS. 7 to 12 lines the substrate pocket; it reads TAGGKS. An interaction with substrate tRNA region spans residues 30 to 33; sequence DSMQ.

This sequence belongs to the IPP transferase family. Monomer. The cofactor is Mg(2+).

It carries out the reaction adenosine(37) in tRNA + dimethylallyl diphosphate = N(6)-dimethylallyladenosine(37) in tRNA + diphosphate. Catalyzes the transfer of a dimethylallyl group onto the adenine at position 37 in tRNAs that read codons beginning with uridine, leading to the formation of N6-(dimethylallyl)adenosine (i(6)A). In Frankia casuarinae (strain DSM 45818 / CECT 9043 / HFP020203 / CcI3), this protein is tRNA dimethylallyltransferase.